Reading from the N-terminus, the 776-residue chain is Kinesin-like protein KIN-8A (776 aa).

Disordered stretches follow at residues 1 to 31 (MPVS…RGGA) and 80 to 135 (VGEV…KSSH). The segment covering 7–26 (ASAAGGQPWSSAAPAPASAP) has biased composition (low complexity). Over residues 123 to 132 (PPPPPAPPPK) the composition is skewed to pro residues. The Kinesin motor domain maps to 205-534 (RIMVFVRLRP…LHWADRAKEI (330 aa)). 297–304 (GATGAGKT) contributes to the ATP binding site. Residues 554-592 (TDQAKLVLELQKENSELRQQLARQQQKLLTVQAQTLASN) are a coiled coil. The tract at residues 590–611 (ASNASPQQSPAPSAQISTPCST) is disordered. Residues 593 to 604 (ASPQQSPAPSAQ) show a composition bias toward low complexity. Positions 634 to 671 (AAENAQVRDLQRKVKAMEAEIEKMKKEHLLQLKQKDEF) form a coiled coil.

It belongs to the TRAFAC class myosin-kinesin ATPase superfamily. Kinesin family. KIN-8 subfamily.

This is Kinesin-like protein KIN-8A from Oryza sativa subsp. japonica (Rice).